The primary structure comprises 602 residues: Histone-arginine methyltransferase CARM1 (602 aa).

In terms of domain architecture, SAM-dependent MTase PRMT-type spans 117–424 (AVQYFQFYGY…KKQSYDISIV (308 aa)). Residues Q130, R139, G163, E185, E214, and S242 each contribute to the S-adenosyl-L-methionine site. The interval 470–602 (TGGAYTMNTG…ITTNTMHYGS (133 aa)) is transactivation domain.

The protein belongs to the class I-like SAM-binding methyltransferase superfamily. Protein arginine N-methyltransferase family. Homodimer.

Its subcellular location is the nucleus. It localises to the cytoplasm. The protein localises to the chromosome. The catalysed reaction is L-arginyl-[protein] + 2 S-adenosyl-L-methionine = N(omega),N(omega)-dimethyl-L-arginyl-[protein] + 2 S-adenosyl-L-homocysteine + 2 H(+). Functionally, methylates (mono- and asymmetric dimethylation) the guanidino nitrogens of arginyl residues in several proteins involved in DNA packaging, transcription regulation, pre-mRNA splicing, and mRNA stability. Recruited to promoters upon gene activation together with histone acetyltransferases from EP300/P300 and p160 families, methylates histone H3 at 'Arg-17' (H3R17me) and activates transcription via chromatin remodeling. This Xenopus laevis (African clawed frog) protein is Histone-arginine methyltransferase CARM1 (carm1).